The following is a 196-amino-acid chain: uncharacterized protein (196 aa).

Residues 11–31 (ICGFLLVILTIGGVLGGVYLV) form a helical membrane-spanning segment.

It is found in the membrane. This is an uncharacterized protein from Mycoplasma genitalium (strain ATCC 33530 / DSM 19775 / NCTC 10195 / G37) (Mycoplasmoides genitalium).